Here is a 377-residue protein sequence, read N- to C-terminus: Chaperone protein DnaJ (377 aa).

The region spanning 5–70 is the J domain; the sequence is DYYEILGVER…EKRAAYDQYG (66 aa). The CR-type zinc-finger motif lies at 134–212; it reads GITKDIQIQT…CHGDGRVHKT (79 aa). Residues Cys-147, Cys-150, Cys-164, Cys-167, Cys-186, Cys-189, Cys-200, and Cys-203 each contribute to the Zn(2+) site. 4 CXXCXGXG motif repeats span residues 147-154, 164-171, 186-193, and 200-207; these read CDHCNGSG, CPTCHGHG, CPHCHGTG, and CKKCHGDG.

Belongs to the DnaJ family. Homodimer. The cofactor is Zn(2+).

The protein localises to the cytoplasm. Its function is as follows. Participates actively in the response to hyperosmotic and heat shock by preventing the aggregation of stress-denatured proteins and by disaggregating proteins, also in an autonomous, DnaK-independent fashion. Unfolded proteins bind initially to DnaJ; upon interaction with the DnaJ-bound protein, DnaK hydrolyzes its bound ATP, resulting in the formation of a stable complex. GrpE releases ADP from DnaK; ATP binding to DnaK triggers the release of the substrate protein, thus completing the reaction cycle. Several rounds of ATP-dependent interactions between DnaJ, DnaK and GrpE are required for fully efficient folding. Also involved, together with DnaK and GrpE, in the DNA replication of plasmids through activation of initiation proteins. This Actinobacillus succinogenes (strain ATCC 55618 / DSM 22257 / CCUG 43843 / 130Z) protein is Chaperone protein DnaJ.